We begin with the raw amino-acid sequence, 251 residues long: POU class 2 homeobox associating factor 3 (251 aa).

Positions 5–27 (PKVYQGVRVKITVKELLQQRRAH) constitute an OCA domain. Residues 24–45 (RRAHQAASGGTRSGGSSVHLSD) form a disordered region. Positions 31 to 40 (SGGTRSGGSS) are enriched in low complexity.

The protein belongs to the POU2AF family. Interacts with POU2F3 in a DNA-dependent manner; this interaction increases POU2F3 transactivation activity. In terms of tissue distribution, expressed in many cell types of epithelial, mesenchymal and hematopoietic origins. Expressed in tufs cells.

It is found in the cytoplasm. It localises to the nucleus. Transcriptional coactivator that specifically associates with POU2F3. This complex drives the development of tuft cells, a rare a rare chemosensory cells that coordinate immune and neural functions within mucosal epithelial tissues. This chain is POU class 2 homeobox associating factor 3, found in Homo sapiens (Human).